A 425-amino-acid chain; its full sequence is Synaptotagmin-4 (425 aa).

The Vesicular segment spans residues 1-16; it reads MAPITTSREEFDEIPT. A helical membrane pass occupies residues 17–37; sequence VVGIFSAFGLVFTVSLFAWIC. At 38–425 the chain is on the cytoplasmic side; it reads CQRKSSKSNK…IAKWHVLCDG (388 aa). The segment covering 73 to 83 has biased composition (basic and acidic residues); sequence FGADDKNEVKN. Disordered regions lie at residues 73–93 and 127–147; these read FGAD…NSLH and LEGE…SLTS. Position 135 is a phosphoserine; by MAPK8 (serine 135). A compositionally biased stretch (low complexity) spans 135 to 146; sequence SPESLKSSTSLT. C2 domains follow at residues 153-274 and 287-420; these read KLGT…MLMN and GRGE…AKWH. Residues aspartate 246, serine 249, and aspartate 252 each contribute to the Ca(2+) site.

The protein belongs to the synaptotagmin family. In terms of assembly, interacts with KIF1A; the interaction increases in presence of calcium and decreases when SYT4 is phosphorylated at Ser-135. Ca(2+) is required as a cofactor. In terms of processing, phosphorylation at Ser-135 by MAPK8/JNK1 reduces interaction with KIF1A and neuronal dense core vesicles mobility. Expressed in melanocytes. Expressed in brain. Within brain, expression is highest in hippocampus, with substantial levels also detected in amygdala and thalamus.

The protein resides in the cytoplasmic vesicle. It localises to the secretory vesicle. The protein localises to the neuronal dense core vesicle membrane. Synaptotagmin family member which does not bind Ca(2+). Involved in neuronal dense core vesicles (DCVs) mobility through its interaction with KIF1A. Upon increased neuronal activity, phosphorylation by MAPK8/JNK1 destabilizes the interaction with KIF1A and captures DCVs to synapses. Plays a role in dendrite formation by melanocytes. This chain is Synaptotagmin-4 (SYT4), found in Homo sapiens (Human).